A 548-amino-acid polypeptide reads, in one-letter code: 5-epi-aristolochene synthase (548 aa).

The (2E,6E)-farnesyl diphosphate site is built by Arg264, Asp301, Asp305, Arg441, and Asp444. Asp301 and Asp305 together coordinate Mg(2+). The DDXXD motif signature appears at 301-305 (DDTFD). Mg(2+)-binding residues include Asp444, Asp445, Thr448, and Glu452.

This sequence belongs to the terpene synthase family. As to quaternary structure, monomer. Requires Mg(2+) as cofactor. In terms of processing, self-alkylated at Tyr-520 in the presence of (2Z,6E)-farnesyl diphosphate ((Z,E)-FPP). Self-alkylated at Asp-444 at warm temperature (42 degrees Celsius) in the presence of (2E,6E)-farnesyl diphosphate ((E,E)-FPP).

The protein resides in the cytoplasm. It carries out the reaction (2E,6E)-farnesyl diphosphate = (+)-5-epi-aristolochene + diphosphate. It catalyses the reaction (2Z,6E)-farnesyl diphosphate = (+)-2-epi-prezizaene + diphosphate. The enzyme catalyses (2Z,6E)-farnesyl diphosphate = (-)-alpha-cedrene + diphosphate. The catalysed reaction is (2Z,6E)-farnesyl diphosphate = (-)-beta-curcumene + diphosphate. It functions in the pathway secondary metabolite biosynthesis; terpenoid biosynthesis. With respect to regulation, inhibited activity toward farnesyl diphosphate (FPP) by anilinogeranyl diphosphate (AGPP); AGPP undergoes a cyclization event leading to the formation of a novel macrocyclic paracyclophane alkaloid. Repressed by sesquilavandulyl diphosphate (SPP) via the induction of self-alkyation. Its function is as follows. Catalyzes the cyclization of trans,trans-farnesyl diphosphate (FPP) to the bicyclic intermediate 5-epi-aristolochene, initial step in the conversion of FPP to the sesquiterpenoid antifungal phytoalexin capsidiol. Produces germacrene A as an enzyme-bound intermediate that is not released by the enzyme, but is further cyclized to produce the bicyclic 5-epi-aristolochene. Mediates, at low levels, the formation of 4-epi-eremophilene and premnaspirodiene from trans,trans-farnesyl diphosphate. Also mediates the conversion of cis,trans-farnesyl diphosphate to cisoid minor products such as (+)-2-epi-prezizaene, (-)-alpha-cedrene and, to a lesser extent, (-)-beta-curcumene; also produces, at low levels, alpha-acoradiene and 4-epi-alpha-acoradiene, but barely nerolidol, alpha-bisabolol, epi-alpha-bisabolol and cis-farnesol. In Nicotiana tabacum (Common tobacco), this protein is 5-epi-aristolochene synthase (EAS3).